The following is a 240-amino-acid chain: UDP-2,3-diacylglucosamine hydrolase (240 aa).

Positions 8, 10, 41, 79, and 114 each coordinate Mn(2+). 79-80 (NR) lines the substrate pocket. Asp122, Ser160, Asn164, Lys167, and His195 together coordinate substrate. Mn(2+)-binding residues include His195 and His197.

It belongs to the LpxH family. Mn(2+) serves as cofactor.

It localises to the cell inner membrane. It carries out the reaction UDP-2-N,3-O-bis[(3R)-3-hydroxytetradecanoyl]-alpha-D-glucosamine + H2O = 2-N,3-O-bis[(3R)-3-hydroxytetradecanoyl]-alpha-D-glucosaminyl 1-phosphate + UMP + 2 H(+). The protein operates within glycolipid biosynthesis; lipid IV(A) biosynthesis; lipid IV(A) from (3R)-3-hydroxytetradecanoyl-[acyl-carrier-protein] and UDP-N-acetyl-alpha-D-glucosamine: step 4/6. In terms of biological role, hydrolyzes the pyrophosphate bond of UDP-2,3-diacylglucosamine to yield 2,3-diacylglucosamine 1-phosphate (lipid X) and UMP by catalyzing the attack of water at the alpha-P atom. Involved in the biosynthesis of lipid A, a phosphorylated glycolipid that anchors the lipopolysaccharide to the outer membrane of the cell. In Escherichia coli O6:K15:H31 (strain 536 / UPEC), this protein is UDP-2,3-diacylglucosamine hydrolase.